Consider the following 301-residue polypeptide: Porphobilinogen deaminase (301 aa).

S-(dipyrrolylmethanemethyl)cysteine is present on Cys240.

This sequence belongs to the HMBS family. As to quaternary structure, monomer. The cofactor is dipyrromethane.

It carries out the reaction 4 porphobilinogen + H2O = hydroxymethylbilane + 4 NH4(+). The protein operates within porphyrin-containing compound metabolism; protoporphyrin-IX biosynthesis; coproporphyrinogen-III from 5-aminolevulinate: step 2/4. Functionally, tetrapolymerization of the monopyrrole PBG into the hydroxymethylbilane pre-uroporphyrinogen in several discrete steps. The polypeptide is Porphobilinogen deaminase (Clostridioides difficile (strain 630) (Peptoclostridium difficile)).